Reading from the N-terminus, the 502-residue chain is Glycerol kinase (502 aa).

Thr-13 contributes to the ADP binding site. Residues Thr-13, Thr-14, and Ser-15 each contribute to the ATP site. A sn-glycerol 3-phosphate-binding site is contributed by Thr-13. Arg-17 contributes to the ADP binding site. Arg-83, Glu-84, Tyr-136, and Asp-246 together coordinate sn-glycerol 3-phosphate. Residues Arg-83, Glu-84, Tyr-136, Asp-246, and Gln-247 each coordinate glycerol. Residues Thr-268 and Gly-311 each contribute to the ADP site. ATP contacts are provided by Thr-268, Gly-311, Gln-315, and Gly-412. Residues Gly-412 and Asn-416 each contribute to the ADP site.

This sequence belongs to the FGGY kinase family.

The enzyme catalyses glycerol + ATP = sn-glycerol 3-phosphate + ADP + H(+). It functions in the pathway polyol metabolism; glycerol degradation via glycerol kinase pathway; sn-glycerol 3-phosphate from glycerol: step 1/1. Inhibited by fructose 1,6-bisphosphate (FBP). Its function is as follows. Key enzyme in the regulation of glycerol uptake and metabolism. Catalyzes the phosphorylation of glycerol to yield sn-glycerol 3-phosphate. This chain is Glycerol kinase, found in Francisella tularensis subsp. mediasiatica (strain FSC147).